We begin with the raw amino-acid sequence, 383 residues long: tRNA-specific 2-thiouridylase MnmA (383 aa).

ATP is bound by residues 9–16 (GMSGGVDS) and Met-35. The tract at residues 95–97 (NPD) is interaction with target base in tRNA. The Nucleophile role is filled by Cys-100. Cysteines 100 and 198 form a disulfide. Gly-124 is an ATP binding site. Residues 148 to 150 (KDQ) form an interaction with tRNA region. Residue Cys-198 is the Cysteine persulfide intermediate of the active site. Residues 310–311 (RY) form an interaction with tRNA region.

This sequence belongs to the MnmA/TRMU family.

The protein resides in the cytoplasm. It catalyses the reaction S-sulfanyl-L-cysteinyl-[protein] + uridine(34) in tRNA + AH2 + ATP = 2-thiouridine(34) in tRNA + L-cysteinyl-[protein] + A + AMP + diphosphate + H(+). Catalyzes the 2-thiolation of uridine at the wobble position (U34) of tRNA, leading to the formation of s(2)U34. This chain is tRNA-specific 2-thiouridylase MnmA, found in Paraburkholderia phytofirmans (strain DSM 17436 / LMG 22146 / PsJN) (Burkholderia phytofirmans).